The sequence spans 415 residues: Diaminopimelate decarboxylase (415 aa).

An N6-(pyridoxal phosphate)lysine modification is found at lysine 54. Pyridoxal 5'-phosphate-binding positions include glycine 223 and 264–267 (EPGR). Positions 267, 303, and 307 each coordinate substrate. Cysteine 338 (proton donor) is an active-site residue. Residues glutamate 339 and tyrosine 374 each coordinate substrate. Tyrosine 374 is a binding site for pyridoxal 5'-phosphate.

Belongs to the Orn/Lys/Arg decarboxylase class-II family. LysA subfamily. Homodimer. Pyridoxal 5'-phosphate serves as cofactor.

The catalysed reaction is meso-2,6-diaminopimelate + H(+) = L-lysine + CO2. It participates in amino-acid biosynthesis; L-lysine biosynthesis via DAP pathway; L-lysine from DL-2,6-diaminopimelate: step 1/1. In terms of biological role, specifically catalyzes the decarboxylation of meso-diaminopimelate (meso-DAP) to L-lysine. The protein is Diaminopimelate decarboxylase of Buchnera aphidicola subsp. Schizaphis graminum (strain Sg).